A 357-amino-acid chain; its full sequence is UDP-N-acetylglucosamine--N-acetylmuramyl-(pentapeptide) pyrophosphoryl-undecaprenol N-acetylglucosamine transferase (357 aa).

Residues 11–13 (TGG), asparagine 123, arginine 159, serine 187, isoleucine 241, 260–265 (ALTVAE), and glutamine 286 contribute to the UDP-N-acetyl-alpha-D-glucosamine site.

This sequence belongs to the glycosyltransferase 28 family. MurG subfamily.

The protein localises to the cell inner membrane. The catalysed reaction is di-trans,octa-cis-undecaprenyl diphospho-N-acetyl-alpha-D-muramoyl-L-alanyl-D-glutamyl-meso-2,6-diaminopimeloyl-D-alanyl-D-alanine + UDP-N-acetyl-alpha-D-glucosamine = di-trans,octa-cis-undecaprenyl diphospho-[N-acetyl-alpha-D-glucosaminyl-(1-&gt;4)]-N-acetyl-alpha-D-muramoyl-L-alanyl-D-glutamyl-meso-2,6-diaminopimeloyl-D-alanyl-D-alanine + UDP + H(+). It functions in the pathway cell wall biogenesis; peptidoglycan biosynthesis. Cell wall formation. Catalyzes the transfer of a GlcNAc subunit on undecaprenyl-pyrophosphoryl-MurNAc-pentapeptide (lipid intermediate I) to form undecaprenyl-pyrophosphoryl-MurNAc-(pentapeptide)GlcNAc (lipid intermediate II). The sequence is that of UDP-N-acetylglucosamine--N-acetylmuramyl-(pentapeptide) pyrophosphoryl-undecaprenol N-acetylglucosamine transferase from Aromatoleum aromaticum (strain DSM 19018 / LMG 30748 / EbN1) (Azoarcus sp. (strain EbN1)).